A 623-amino-acid chain; its full sequence is Kelch repeat and BTB domain-containing protein 12 (623 aa).

Residues 25–92 enclose the BTB domain; it reads TDVVLVAEGV…MYSSNLPLTA (68 aa). Positions 127–236 constitute a BACK domain; sequence CLGIYYYARD…GVDYLKGTMK (110 aa). Kelch repeat units lie at residues 390–440, 441–496, 498–551, and 557–607; these read NLYL…RMKG, RLYV…ALNG, IYVL…ASNA, and KLYV…LVAN.

The sequence is that of Kelch repeat and BTB domain-containing protein 12 (kbtbd12) from Danio rerio (Zebrafish).